We begin with the raw amino-acid sequence, 1710 residues long: Phosphatidylinositol 4-phosphate 5-kinase (1710 aa).

The EF-hand domain occupies 68–98; it reads YKSIFKAFDLNNDNYLDFYEFCVAINIMLKG. Ca(2+) is bound by residues D76, N78, D80, Y82, and E87. Disordered regions lie at residues 139-255, 427-479, and 895-993; these read NNMN…DPIN, KQKK…IKSV, and GEGH…HNNN. The segment covering 140–235 has biased composition (low complexity); sequence NMNGDNINGD…HNNNSHNNNN (96 aa). Over residues 236–248 the composition is skewed to polar residues; sequence KAENSLGQPLNEK. The segment covering 427 to 444 has biased composition (basic residues); the sequence is KQKKKKKKKKKKKKKKEK. The segment covering 456–468 has biased composition (low complexity); sequence SSSMENKSQNKSQ. The segment covering 902 to 973 has biased composition (acidic residues); the sequence is EEEEKNDDEE…DDNDDNDDND (72 aa). Over residues 974–987 the composition is skewed to basic and acidic residues; the sequence is EKSNIKIENKKDVP. The 376-residue stretch at 1334–1709 folds into the PIPK domain; the sequence is QKKTFHRILA…RFVTFIENHM (376 aa).

The enzyme catalyses a 1,2-diacyl-sn-glycero-3-phospho-(1D-myo-inositol 4-phosphate) + ATP = a 1,2-diacyl-sn-glycero-3-phospho-(1D-myo-inositol-4,5-bisphosphate) + ADP + H(+). With respect to regulation, catalytic activity is increase by myristoylated ARF1. Phosphatidic acid has no effect on catalytic activity. Its function is as follows. Catalyzes the phosphorylation of phosphatidylinositol 4-phosphate (PtdIns(4)P/PI4P) to form phosphatidylinositol 4,5-bisphosphate (PtdIns(4,5)P2/PIP2), a lipid second messenger that regulates several cellular processes. The protein is Phosphatidylinositol 4-phosphate 5-kinase of Plasmodium falciparum (isolate 3D7).